The sequence spans 351 residues: Histidinol-phosphate aminotransferase (351 aa).

Residue Lys-214 is modified to N6-(pyridoxal phosphate)lysine.

Belongs to the class-II pyridoxal-phosphate-dependent aminotransferase family. Histidinol-phosphate aminotransferase subfamily. Pyridoxal 5'-phosphate is required as a cofactor.

It carries out the reaction L-histidinol phosphate + 2-oxoglutarate = 3-(imidazol-4-yl)-2-oxopropyl phosphate + L-glutamate. The protein operates within amino-acid biosynthesis; L-histidine biosynthesis; L-histidine from 5-phospho-alpha-D-ribose 1-diphosphate: step 7/9. This Methanosphaerula palustris (strain ATCC BAA-1556 / DSM 19958 / E1-9c) protein is Histidinol-phosphate aminotransferase.